Consider the following 185-residue polypeptide: Protein GrpE (185 aa).

The interval 1–37 (MSEEKQTPEQEAEVEAQEEAVQADTEEVTQDEQSAFQ) is disordered.

The protein belongs to the GrpE family. Homodimer.

The protein localises to the cytoplasm. In terms of biological role, participates actively in the response to hyperosmotic and heat shock by preventing the aggregation of stress-denatured proteins, in association with DnaK and GrpE. It is the nucleotide exchange factor for DnaK and may function as a thermosensor. Unfolded proteins bind initially to DnaJ; upon interaction with the DnaJ-bound protein, DnaK hydrolyzes its bound ATP, resulting in the formation of a stable complex. GrpE releases ADP from DnaK; ATP binding to DnaK triggers the release of the substrate protein, thus completing the reaction cycle. Several rounds of ATP-dependent interactions between DnaJ, DnaK and GrpE are required for fully efficient folding. In Bacillus pumilus (strain SAFR-032), this protein is Protein GrpE.